A 688-amino-acid chain; its full sequence is Nucleolar protein 10 (688 aa).

Residue Met1 is modified to N-acetylmethionine. Ser25 bears the Phosphoserine mark. WD repeat units follow at residues 44 to 82 (ELIQ…CYDT), 88 to 124 (KFER…FHSQ), 127 to 163 (FYYK…RLNL), 170 to 205 (NPLQ…CWDP), 219 to 258 (NSVT…LYDL), 262 to 300 (KPLL…MWNK), and 304 to 341 (KIFT…IYYI). Positions 423-446 (EYRKDKIRQKIEETRAQRVQLKKL) form a coiled coil. At Ser475 the chain carries Phosphoserine. The residue at position 481 (Thr481) is a Phosphothreonine. Ser514 carries the post-translational modification Phosphoserine. Coiled-coil stretches lie at residues 514–589 (SEKR…TVLK) and 640–673 (SKQL…LRRS). Disordered regions lie at residues 529–557 (LREK…EKAW) and 645–688 (FTLK…RSFH). Residues 648–663 (KRSEQQKKQQEAEKLH) show a composition bias toward basic and acidic residues. The segment covering 664-688 (RQERKRLRRSAGHLKSRHKRGRSFH) has biased composition (basic residues).

The protein belongs to the WD repeat NOL10/ENP2 family.

The protein resides in the nucleus. It localises to the nucleolus. This chain is Nucleolar protein 10 (NOL10), found in Homo sapiens (Human).